The sequence spans 63 residues: DNA-directed RNA polymerase 7 kDa subunit (63 aa).

This sequence belongs to the poxviridae DNA-directed RNA polymerase 7 kDa subunit family. The DNA-dependent RNA polymerase (vRNAP) consists of eight subunits encoded by early viral genes and termed according to their apparent molecular masses Rpo147, Rpo132, Rpo35, Rpo30, Rpo22, Rpo19, Rpo18, and Rpo7. The same holoenzyme, with the addition of the transcription-specificity factor RAP94, is used for early gene expression.

The protein localises to the virion. It carries out the reaction RNA(n) + a ribonucleoside 5'-triphosphate = RNA(n+1) + diphosphate. Functionally, part of the DNA-dependent RNA polymerase which catalyzes the transcription of viral DNA into RNA using the four ribonucleoside triphosphates as substrates. Responsible for the transcription of early, intermediate and late genes. DNA-dependent RNA polymerase associates with the early transcription factor (ETF), itself composed of OPG118 and OPG134, thereby allowing the early genes transcription. Late transcription, and probably also intermediate transcription, require newly synthesized RNA polymerase. This chain is DNA-directed RNA polymerase 7 kDa subunit (OPG090), found in Homo sapiens (Human).